Here is a 429-residue protein sequence, read N- to C-terminus: MKKQNNLRSLAAQAVEQVVEQGQSLSNVLPPLQQKVADKDKALLQELCFGVLRTLSQLEWLINKLMSRPMTGKQRTVHYLIMVGFYQLLYTRVPPHAALAETVEGAVSIKRPQLKGLINGVLRQFQRQQETLLNEFATSDARFLHPGWLVKRLQNAYPTQWQRIIEANNQRPPMWLRVNRTHHTRDGWLGLLEDAGMKGYPHPDYPDAVRLETPAPVHALPGFAEGWVTVQDASAQGCAVFLAPQNGEHILDLCAAPGGKTTHILEVAPEADVVAVDIDEQRLSRVYDNLKRLGMKATVKQGDGRYPAQWCGEQQFDRILLDAPCSATGVIRRHPDIKWLRRDRDIAELAQLQAEILDAVWPRLKPGGTLVYATCSVLPEENRDQIKTFLQRTPDAALSETGTPDQPGQQNLPGGEEGDGFFYAKLIKK.

Residues 254 to 260 (CAAPGGK), D277, D303, and D322 each bind S-adenosyl-L-methionine. Catalysis depends on C375, which acts as the Nucleophile. A disordered region spans residues 397–419 (ALSETGTPDQPGQQNLPGGEEGD). Over residues 400-412 (ETGTPDQPGQQNL) the composition is skewed to polar residues.

This sequence belongs to the class I-like SAM-binding methyltransferase superfamily. RsmB/NOP family.

It localises to the cytoplasm. The catalysed reaction is cytidine(967) in 16S rRNA + S-adenosyl-L-methionine = 5-methylcytidine(967) in 16S rRNA + S-adenosyl-L-homocysteine + H(+). Functionally, specifically methylates the cytosine at position 967 (m5C967) of 16S rRNA. The polypeptide is Ribosomal RNA small subunit methyltransferase B (Salmonella paratyphi B (strain ATCC BAA-1250 / SPB7)).